The following is a 519-amino-acid chain: S-type anion channel SLAH2 (519 aa).

A disordered region spans residues methionine 1 to phenylalanine 31. The Cytoplasmic portion of the chain corresponds to methionine 1–leucine 140. Residues leucine 20–glycine 29 show a composition bias toward polar residues. Serine 77 and serine 85 each carry phosphoserine. A helical membrane pass occupies residues leucine 141–tryptophan 161. The Extracellular segment spans residues lysine 162–tryptophan 185. A helical membrane pass occupies residues isoleucine 186–phenylalanine 206. The Cytoplasmic portion of the chain corresponds to glutamate 207–asparagine 220. A helical membrane pass occupies residues phenylalanine 221–isoleucine 241. Residues serine 242 to threonine 247 are Extracellular-facing. Residues leucine 248–methionine 268 traverse the membrane as a helical segment. Over serine 269–proline 281 the chain is Cytoplasmic. The chain crosses the membrane as a helical span at residues threonine 282 to leucine 302. Topologically, residues lysine 303–glutamate 304 are extracellular. A helical transmembrane segment spans residues glycine 305–tyrosine 325. The Cytoplasmic segment spans residues glutamine 326–proline 340. The chain crosses the membrane as a helical span at residues valine 341–alanine 361. A topological domain (extracellular) is located at residue serine 362. The helical transmembrane segment at phenylalanine 363–cysteine 383 threads the bilayer. Topologically, residues arginine 384–arginine 389 are cytoplasmic. Residues glycine 390–alanine 410 traverse the membrane as a helical segment. At threonine 411 to lysine 424 the chain is on the extracellular side. The helical transmembrane segment at isoleucine 425 to threonine 445 threads the bilayer. Over valine 446–asparagine 519 the chain is Cytoplasmic. The segment at proline 495–asparagine 519 is disordered. Over residues valine 510 to asparagine 519 the composition is skewed to polar residues.

The protein belongs to the SLAC1 S-type anion channel family. Homotrimer. As to expression, expressed in lateral root primordia and tap root tips.

It is found in the cell membrane. In terms of biological role, slow, weak voltage-dependent S-type anion efflux channel involved in maintenance of anion homeostasis. This chain is S-type anion channel SLAH2 (SLAH2), found in Arabidopsis thaliana (Mouse-ear cress).